Here is a 173-residue protein sequence, read N- to C-terminus: Crossover junction endodeoxyribonuclease RuvC (173 aa).

Catalysis depends on residues aspartate 8, glutamate 69, and aspartate 141. Aspartate 8, glutamate 69, and aspartate 141 together coordinate Mg(2+).

The protein belongs to the RuvC family. In terms of assembly, homodimer which binds Holliday junction (HJ) DNA. The HJ becomes 2-fold symmetrical on binding to RuvC with unstacked arms; it has a different conformation from HJ DNA in complex with RuvA. In the full resolvosome a probable DNA-RuvA(4)-RuvB(12)-RuvC(2) complex forms which resolves the HJ. Mg(2+) serves as cofactor.

The protein localises to the cytoplasm. It carries out the reaction Endonucleolytic cleavage at a junction such as a reciprocal single-stranded crossover between two homologous DNA duplexes (Holliday junction).. The RuvA-RuvB-RuvC complex processes Holliday junction (HJ) DNA during genetic recombination and DNA repair. Endonuclease that resolves HJ intermediates. Cleaves cruciform DNA by making single-stranded nicks across the HJ at symmetrical positions within the homologous arms, yielding a 5'-phosphate and a 3'-hydroxyl group; requires a central core of homology in the junction. The consensus cleavage sequence is 5'-(A/T)TT(C/G)-3'. Cleavage occurs on the 3'-side of the TT dinucleotide at the point of strand exchange. HJ branch migration catalyzed by RuvA-RuvB allows RuvC to scan DNA until it finds its consensus sequence, where it cleaves and resolves the cruciform DNA. This Stenotrophomonas maltophilia (strain K279a) protein is Crossover junction endodeoxyribonuclease RuvC.